Here is a 168-residue protein sequence, read N- to C-terminus: Large ribosomal subunit protein bL9 (168 aa).

Residues 149–168 form a disordered region; that stretch reads QSFEEEPAPEAPAEEAEAAE. The span at 152-168 shows a compositional bias: acidic residues; that stretch reads EEEPAPEAPAEEAEAAE.

The protein belongs to the bacterial ribosomal protein bL9 family.

Functionally, binds to the 23S rRNA. In Desulfovibrio desulfuricans (strain ATCC 27774 / DSM 6949 / MB), this protein is Large ribosomal subunit protein bL9.